A 208-amino-acid polypeptide reads, in one-letter code: Holliday junction branch migration complex subunit RuvA (208 aa).

The domain I stretch occupies residues 1–67; that stretch reads MIGWLHGTIG…EDGQQLYGFE (67 aa). Positions 68 to 146 are domain II; it reads TKADRNLFRL…ERWQQQGGST (79 aa). A flexible linker region spans residues 147–157; sequence PLRLVEPVAES. The segment at 157–208 is domain III; that stretch reads SRELRATLEALGYGPEEVSAAVAQAGSQGLDPEQPMEEWLRHCLAWLSRQAG.

This sequence belongs to the RuvA family. In terms of assembly, homotetramer. Forms an RuvA(8)-RuvB(12)-Holliday junction (HJ) complex. HJ DNA is sandwiched between 2 RuvA tetramers; dsDNA enters through RuvA and exits via RuvB. An RuvB hexamer assembles on each DNA strand where it exits the tetramer. Each RuvB hexamer is contacted by two RuvA subunits (via domain III) on 2 adjacent RuvB subunits; this complex drives branch migration. In the full resolvosome a probable DNA-RuvA(4)-RuvB(12)-RuvC(2) complex forms which resolves the HJ.

The protein localises to the cytoplasm. The RuvA-RuvB-RuvC complex processes Holliday junction (HJ) DNA during genetic recombination and DNA repair, while the RuvA-RuvB complex plays an important role in the rescue of blocked DNA replication forks via replication fork reversal (RFR). RuvA specifically binds to HJ cruciform DNA, conferring on it an open structure. The RuvB hexamer acts as an ATP-dependent pump, pulling dsDNA into and through the RuvAB complex. HJ branch migration allows RuvC to scan DNA until it finds its consensus sequence, where it cleaves and resolves the cruciform DNA. The polypeptide is Holliday junction branch migration complex subunit RuvA (Synechococcus sp. (strain RCC307)).